The primary structure comprises 561 residues: 3beta-hydroxysteroid-dehydrogenase/decarboxylase isoform 3 (561 aa).

NAD(+) is bound at residue Lys-166. Positions 379-561 (VADILLWRNE…SDASSKPMFM (183 aa)) constitute a Reticulon domain. A run of 3 helical transmembrane segments spans residues 392–412 (FVSF…GNTF), 420–440 (LFIF…IFGF), and 504–524 (SLAA…FIYE).

The protein belongs to the 3-beta-HSD family.

The protein resides in the endoplasmic reticulum membrane. The enzyme catalyses a 3beta-hydroxysteroid-4alpha-carboxylate + NADP(+) = a 3-oxosteroid + CO2 + NADPH. It carries out the reaction a 3beta-hydroxysteroid-4alpha-carboxylate + NAD(+) = a 3-oxosteroid + CO2 + NADH. It functions in the pathway steroid biosynthesis; zymosterol biosynthesis; zymosterol from lanosterol: step 4/6. The chain is 3beta-hydroxysteroid-dehydrogenase/decarboxylase isoform 3 (3BETAHSD/D3) from Arabidopsis thaliana (Mouse-ear cress).